The following is a 424-amino-acid chain: Glutathione reductase (424 aa).

Lys-8 lines the FAD pocket. Residue Tyr-56 participates in glutathione binding. An FAD-binding site is contributed by Ala-72. The NADP(+) site is built by Ala-137, Ile-140, Glu-143, Arg-160, Arg-166, and Gly-236. An FAD-binding site is contributed by Asp-277. Residue Leu-283 coordinates NADP(+). Thr-285 is a binding site for FAD. Glutathione is bound at residue Arg-293. Position 316 (Val-316) interacts with NADP(+). An FAD-binding site is contributed by His-413. Residue His-413 is the Proton acceptor of the active site.

This sequence belongs to the class-I pyridine nucleotide-disulfide oxidoreductase family. In terms of assembly, homodimer; disulfide-linked. The cofactor is FAD.

Its subcellular location is the mitochondrion. The protein localises to the cytoplasm. It catalyses the reaction 2 glutathione + NADP(+) = glutathione disulfide + NADPH + H(+). Catalyzes the reduction of glutathione disulfide (GSSG) to reduced glutathione (GSH). Constitutes the major mechanism to maintain a high GSH:GSSG ratio in the cytosol. The protein is Glutathione reductase (Gsr) of Rattus norvegicus (Rat).